The sequence spans 658 residues: Glycogen debranching enzyme (658 aa).

Catalysis depends on aspartate 335, which acts as the Nucleophile. Glutamate 370 acts as the Proton donor in catalysis.

Belongs to the glycosyl hydrolase 13 family.

The catalysed reaction is Hydrolysis of (1-&gt;6)-alpha-D-glucosidic linkages to branches with degrees of polymerization of three or four glucose residues in limit dextrin.. The protein operates within glycan degradation; glycogen degradation. Its function is as follows. Removes maltotriose and maltotetraose chains that are attached by 1,6-alpha-linkage to the limit dextrin main chain, generating a debranched limit dextrin. The polypeptide is Glycogen debranching enzyme (Erwinia tasmaniensis (strain DSM 17950 / CFBP 7177 / CIP 109463 / NCPPB 4357 / Et1/99)).